The following is a 171-amino-acid chain: Dual-action ribosomal maturation protein DarP (171 aa).

The disordered stretch occupies residues 1–30; the sequence is MPKRPAENPEQSDDFVSKSQKKREMAERQE.

The protein belongs to the DarP family.

The protein resides in the cytoplasm. In terms of biological role, member of a network of 50S ribosomal subunit biogenesis factors which assembles along the 30S-50S interface, preventing incorrect 23S rRNA structures from forming. Promotes peptidyl transferase center (PTC) maturation. This Idiomarina loihiensis (strain ATCC BAA-735 / DSM 15497 / L2-TR) protein is Dual-action ribosomal maturation protein DarP.